Consider the following 600-residue polypeptide: Chaperone protein DnaK (600 aa).

The residue at position 175 (Thr175) is a Phosphothreonine; by autocatalysis. Residues 569-578 (SFAQATAQQA) are compositionally biased toward low complexity. Residues 569–600 (SFAQATAQQANTSESDPKADDSNTIDAEIKQD) form a disordered region. The segment covering 583 to 600 (SDPKADDSNTIDAEIKQD) has biased composition (basic and acidic residues).

This sequence belongs to the heat shock protein 70 family.

Its function is as follows. Acts as a chaperone. This chain is Chaperone protein DnaK, found in Mesomycoplasma hyopneumoniae (strain 7448) (Mycoplasma hyopneumoniae).